A 723-amino-acid polypeptide reads, in one-letter code: MEQEKRVFSIDVAGRPLIIETGELAKQANGAALVRYGDTVVLSTATASREAKNVDFFPLTVNYEERLYAVGKIPGGFIKREGRPSEKAILVSRLIDRPIRPLFAEGFRNEVQVVSMVMSVDQDCAPEVAALIGSSVALTISDIPFEGPIAGVIVGRVDGQFVINPTVEQMEKSDLHLVVAGTKDAINMVEAGADEVPEEVILEAIMFGHEEVKRLIAFQEEIAAQVGKEKMEVVLYEPDPALEAEIRQLAEADIKRAVQVPEKLARDAAIEDVKAGVIAKYEAEEADEEKLKQVQEILHKLVKEEVRRLITVEKIRPDGRKVDEIRPLSSAVGVLPRTHGSGLFTRGQTQVLSVCTLGALGDVQILDGLDLEESKRFMHHYNFPPFSVGETGPMRGPGRREIGHGALGERALEPVVPSEREFPYTIRLVSEVLESNGSTSQASICASTLAMMDAGVPIKAPVAGIAMGLVKNDDHYTILTDIQGIEDHLGDMDFKVAGTRKGVTALQMDIKIKGLTREILEEALMQARKGRLEILDHMMQTLSEPRKELSKYAPKILIMHINPDKIREVIGPSGKQINKIIDETGVKIDIEQDGTIFISSVDEAANQKAKQIIEDIVREVEVGQVYLGKVKRIEKFGAFVELFNGKDGLVHISELAEGRVGKVEDVVSIGDEILVKVTEIDKQGRVNLSRKAVLRDARNIGGELPRESREKRGRRPERHRMKP.

The Mg(2+) site is built by D487 and D493. One can recognise a KH domain in the interval 554-613; sequence PKILIMHINPDKIREVIGPSGKQINKIIDETGVKIDIEQDGTIFISSVDEAANQKAKQII. An S1 motif domain is found at 623–691; sequence GQVYLGKVKR…KQGRVNLSRK (69 aa). The segment at 702 to 723 is disordered; the sequence is GELPRESREKRGRRPERHRMKP. Residues 711 to 723 are compositionally biased toward basic residues; the sequence is KRGRRPERHRMKP.

It belongs to the polyribonucleotide nucleotidyltransferase family. Requires Mg(2+) as cofactor.

Its subcellular location is the cytoplasm. The catalysed reaction is RNA(n+1) + phosphate = RNA(n) + a ribonucleoside 5'-diphosphate. Involved in mRNA degradation. Catalyzes the phosphorolysis of single-stranded polyribonucleotides processively in the 3'- to 5'-direction. The protein is Polyribonucleotide nucleotidyltransferase of Geobacillus kaustophilus (strain HTA426).